The chain runs to 589 residues: Glucose starvation modulator protein 1 (589 aa).

Residues 20–48 constitute a DNA-binding region (zn(2)-C6 fungal-type); sequence CVFCHQKHLQCSNERPCKNCVKRNIGHEC. Disordered regions lie at residues 59 to 90, 218 to 240, and 340 to 362; these read LTGN…PSVA, NNSN…NPEP, and ANGQ…PGNG. A compositionally biased stretch (polar residues) spans 80–90; it reads TPITASSPSVA. The segment covering 347–357 has biased composition (basic and acidic residues); sequence LLDHNKDDSRK. The region spanning 471–542 is the PAS domain; sequence SLLDYKKLVE…FKFFKNIAVN (72 aa).

It belongs to the ERT1/acuK family.

It localises to the nucleus. In terms of biological role, transcription factor which regulates nonfermentable carbon utilization. In Candida tropicalis (strain ATCC MYA-3404 / T1) (Yeast), this protein is Glucose starvation modulator protein 1 (GSM1).